Reading from the N-terminus, the 305-residue chain is Oxygen-dependent coproporphyrinogen-III oxidase (305 aa).

Substrate is bound at residue S98. The a divalent metal cation site is built by H102 and H112. The active-site Proton donor is the H112. N114 to R116 lines the substrate pocket. Residues H151 and H181 each contribute to the a divalent metal cation site. Residues Y246–E281 are important for dimerization. G264–R266 contributes to the substrate binding site.

It belongs to the aerobic coproporphyrinogen-III oxidase family. As to quaternary structure, homodimer. A divalent metal cation is required as a cofactor.

It localises to the cytoplasm. It carries out the reaction coproporphyrinogen III + O2 + 2 H(+) = protoporphyrinogen IX + 2 CO2 + 2 H2O. Its pathway is porphyrin-containing compound metabolism; protoporphyrin-IX biosynthesis; protoporphyrinogen-IX from coproporphyrinogen-III (O2 route): step 1/1. Its function is as follows. Involved in the heme biosynthesis. Catalyzes the aerobic oxidative decarboxylation of propionate groups of rings A and B of coproporphyrinogen-III to yield the vinyl groups in protoporphyrinogen-IX. This is Oxygen-dependent coproporphyrinogen-III oxidase from Vibrio parahaemolyticus serotype O3:K6 (strain RIMD 2210633).